A 560-amino-acid polypeptide reads, in one-letter code: DNA ligase B (560 aa).

The active-site N6-AMP-lysine intermediate is K124.

This sequence belongs to the NAD-dependent DNA ligase family. LigB subfamily.

It catalyses the reaction NAD(+) + (deoxyribonucleotide)n-3'-hydroxyl + 5'-phospho-(deoxyribonucleotide)m = (deoxyribonucleotide)n+m + AMP + beta-nicotinamide D-nucleotide.. Catalyzes the formation of phosphodiester linkages between 5'-phosphoryl and 3'-hydroxyl groups in double-stranded DNA using NAD as a coenzyme and as the energy source for the reaction. The chain is DNA ligase B from Escherichia coli O139:H28 (strain E24377A / ETEC).